A 595-amino-acid chain; its full sequence is Aspartate--tRNA(Asp/Asn) ligase (595 aa).

E178 contacts L-aspartate. An aspartate region spans residues Q202–K205. Residue R224 participates in L-aspartate binding. ATP is bound by residues R224–E226 and Q233. H458 provides a ligand contact to L-aspartate. Residue E488 participates in ATP binding. R495 is a binding site for L-aspartate. ATP is bound at residue G540–R543.

It belongs to the class-II aminoacyl-tRNA synthetase family. Type 1 subfamily. In terms of assembly, homodimer.

It is found in the cytoplasm. The catalysed reaction is tRNA(Asx) + L-aspartate + ATP = L-aspartyl-tRNA(Asx) + AMP + diphosphate. Functionally, aspartyl-tRNA synthetase with relaxed tRNA specificity since it is able to aspartylate not only its cognate tRNA(Asp) but also tRNA(Asn). Reaction proceeds in two steps: L-aspartate is first activated by ATP to form Asp-AMP and then transferred to the acceptor end of tRNA(Asp/Asn). The sequence is that of Aspartate--tRNA(Asp/Asn) ligase from Acaryochloris marina (strain MBIC 11017).